We begin with the raw amino-acid sequence, 456 residues long: Glycerol-3-phosphate dehydrogenase [NAD(+)] At3g07690, cytosolic (456 aa).

Residues 41–46 (GAGAWG), K189, and A228 each bind NAD(+). Residue K189 participates in substrate binding. K278 acts as the Proton acceptor in catalysis. NAD(+) is bound by residues R340 and Q368. 340–341 (RN) is a binding site for substrate.

This sequence belongs to the NAD-dependent glycerol-3-phosphate dehydrogenase family. Homodimer.

It localises to the cytoplasm. The catalysed reaction is sn-glycerol 3-phosphate + NAD(+) = dihydroxyacetone phosphate + NADH + H(+). Required for glycerol-3-phosphate (G3P) accumulation during systemic acquired resistance (SAR) establishment. The chain is Glycerol-3-phosphate dehydrogenase [NAD(+)] At3g07690, cytosolic from Arabidopsis thaliana (Mouse-ear cress).